The primary structure comprises 190 residues: Cytoplasmic envelopment protein 3 (190 aa).

G2 carries N-myristoyl glycine; by host lipidation. Residues 27-190 (RQVSLRSYDN…TKKPAASLPF (164 aa)) form a disordered region. Residues 30-43 (SLRSYDNIPPTSSS) show a composition bias toward polar residues. Over residues 44-58 (DEGEDDDDGEDDDNE) the composition is skewed to acidic residues. Over residues 80 to 90 (SHREATHDGSK) the composition is skewed to basic and acidic residues. A compositionally biased stretch (basic residues) spans 108–123 (KQSKKKKKPSKHHHHQ). Residues 130 to 139 (ETDDLDEEDT) show a composition bias toward acidic residues.

The protein belongs to the herpesviridae cytoplasmic envelopment protein 3 family. In terms of assembly, interacts with cytoplasmic envelopment protein 2; this interaction is essential for the proper localization of each protein to the assembly complex and thus for the production of infectious virus. Myristoylation and palmitoylation (probably on one or more of the nearby cysteines at the N-terminus) enable membrane-binding and Golgi apparatus-specific targeting and are essential for efficient packaging. In terms of processing, phosphorylated. Phosphorylation does not seem to be required for recycling to the host Golgi apparatus. Packaging is selective for underphosphorylated forms.

Its subcellular location is the virion tegument. The protein localises to the virion membrane. It is found in the host cell membrane. It localises to the host Golgi apparatus membrane. Its function is as follows. Plays an important role in the cytoplasmic envelopment of tegument proteins and capsids during the assembly and egress processes. Also participates in viral entry at the fusion step probably by regulating the core fusion machinery. The sequence is that of Cytoplasmic envelopment protein 3 (UL99) from Human cytomegalovirus (strain AD169) (HHV-5).